The sequence spans 150 residues: Large ribosomal subunit protein uL15 (150 aa).

Residues 1–51 (MKLHTLRPAKGSVKTSKRIGRGTGSGRGGTSTKGHKGAKSRSGYSSKIGFE) form a disordered region. Residues 21–31 (RGTGSGRGGTS) show a composition bias toward gly residues.

This sequence belongs to the universal ribosomal protein uL15 family. Part of the 50S ribosomal subunit.

In terms of biological role, binds to the 23S rRNA. This chain is Large ribosomal subunit protein uL15, found in Cytophaga hutchinsonii (strain ATCC 33406 / DSM 1761 / CIP 103989 / NBRC 15051 / NCIMB 9469 / D465).